We begin with the raw amino-acid sequence, 121 residues long: Small ribosomal subunit protein uS13 (121 aa).

Residues 91 to 121 (HRRGLPVRGQNSKNNARTRKGPRRTVANKKK) are disordered. The segment covering 106-121 (ARTRKGPRRTVANKKK) has biased composition (basic residues).

The protein belongs to the universal ribosomal protein uS13 family. Part of the 30S ribosomal subunit. Forms a loose heterodimer with protein S19. Forms two bridges to the 50S subunit in the 70S ribosome.

Its function is as follows. Located at the top of the head of the 30S subunit, it contacts several helices of the 16S rRNA. In the 70S ribosome it contacts the 23S rRNA (bridge B1a) and protein L5 of the 50S subunit (bridge B1b), connecting the 2 subunits; these bridges are implicated in subunit movement. Contacts the tRNAs in the A and P-sites. This is Small ribosomal subunit protein uS13 from Bacillus cereus (strain AH187).